The following is a 474-amino-acid chain: 3-isopropylmalate dehydratase large subunit (474 aa).

C350, C411, and C414 together coordinate [4Fe-4S] cluster.

This sequence belongs to the aconitase/IPM isomerase family. LeuC type 1 subfamily. As to quaternary structure, heterodimer of LeuC and LeuD. [4Fe-4S] cluster is required as a cofactor.

It carries out the reaction (2R,3S)-3-isopropylmalate = (2S)-2-isopropylmalate. It functions in the pathway amino-acid biosynthesis; L-leucine biosynthesis; L-leucine from 3-methyl-2-oxobutanoate: step 2/4. Its function is as follows. Catalyzes the isomerization between 2-isopropylmalate and 3-isopropylmalate, via the formation of 2-isopropylmaleate. The sequence is that of 3-isopropylmalate dehydratase large subunit from Hydrogenovibrio crunogenus (strain DSM 25203 / XCL-2) (Thiomicrospira crunogena).